Reading from the N-terminus, the 114-residue chain is rRNA-processing protein cgrA (114 aa).

Residues 1–13 show a composition bias toward low complexity; it reads MSSAAPAPSTHAA. Disordered stretches follow at residues 1–47 and 77–114; these read MSSA…AARK and RRAAKEEKERYEKMAEKMHRKRVERLKKREKRNKLLNS. Positions 40–101 form a coiled coil; it reads TKRAAARKEQ…EKMHRKRVER (62 aa). Over residues 77–93 the composition is skewed to basic and acidic residues; it reads RRAAKEEKERYEKMAEK. The segment covering 94–114 has biased composition (basic residues); the sequence is MHRKRVERLKKREKRNKLLNS.

This sequence belongs to the CGR1 family.

The protein localises to the nucleus. Its subcellular location is the nucleolus. Involved in nucleolar integrity and required for processing of the pre-rRNA for the 60S ribosome subunit. The sequence is that of rRNA-processing protein cgrA (cgrA) from Emericella nidulans (strain FGSC A4 / ATCC 38163 / CBS 112.46 / NRRL 194 / M139) (Aspergillus nidulans).